Reading from the N-terminus, the 294-residue chain is Kynurenine formamidase (294 aa).

Positions 1 to 14 (MSRWKDMNKDELER) are enriched in basic and acidic residues. A disordered region spans residues 1–20 (MSRWKDMNKDELERQFSPSQ). The HGGXW signature appears at 84-88 (HGGYW). The active-site Nucleophile is the Ser-153. Catalysis depends on residues Asp-236 and His-269.

Belongs to the kynurenine formamidase family. As to quaternary structure, homodimer.

It localises to the cytoplasm. It is found in the cytosol. The protein localises to the nucleus. The enzyme catalyses N-formyl-L-kynurenine + H2O = L-kynurenine + formate + H(+). The protein operates within amino-acid degradation; L-tryptophan degradation via kynurenine pathway; L-kynurenine from L-tryptophan: step 2/2. Its function is as follows. Catalyzes the hydrolysis of N-formyl-L-kynurenine to L-kynurenine, the second step in the kynurenine pathway of tryptophan degradation. Kynurenine may be further oxidized to nicotinic acid, NAD(H) and NADP(H). Required for elimination of toxic metabolites. This Salmo salar (Atlantic salmon) protein is Kynurenine formamidase (afmid).